Reading from the N-terminus, the 240-residue chain is Peptidyl-tRNA hydrolase (240 aa).

Tyr-14 provides a ligand contact to tRNA. Residue His-19 is the Proton acceptor of the active site. Positions 64, 66, and 112 each coordinate tRNA. Basic and acidic residues predominate over residues 190-204 (KADEEKPRKDSEKKP). The segment at 190 to 240 (KADEEKPRKDSEKKPAGQSHIRQARNNNQPKLPATGPMADMLKKMFGNKGE) is disordered. Over residues 209–219 (HIRQARNNNQP) the composition is skewed to polar residues.

It belongs to the PTH family. In terms of assembly, monomer.

The protein localises to the cytoplasm. The catalysed reaction is an N-acyl-L-alpha-aminoacyl-tRNA + H2O = an N-acyl-L-amino acid + a tRNA + H(+). Hydrolyzes ribosome-free peptidyl-tRNAs (with 1 or more amino acids incorporated), which drop off the ribosome during protein synthesis, or as a result of ribosome stalling. Its function is as follows. Catalyzes the release of premature peptidyl moieties from peptidyl-tRNA molecules trapped in stalled 50S ribosomal subunits, and thus maintains levels of free tRNAs and 50S ribosomes. The protein is Peptidyl-tRNA hydrolase of Rhizobium etli (strain ATCC 51251 / DSM 11541 / JCM 21823 / NBRC 15573 / CFN 42).